We begin with the raw amino-acid sequence, 478 residues long: Methionine aminopeptidase 2 (478 aa).

Positions 1–122 (MAGVEQAASF…TDPPSVPICD (122 aa)) are disordered. Ala2 carries the post-translational modification N-acetylalanine. Basic residues predominate over residues 36–46 (KKKRRKKKKGK). A Phosphoserine; alternate modification is found at Ser60. Ser60 carries an O-linked (GlcNAc) serine; alternate glycan. A compositionally biased stretch (acidic residues) spans 80-92 (ERDDDDEDGDGDA). The segment covering 97–109 (GKKKKKKKKKRGP) has biased composition (basic residues). Position 231 (His231) interacts with substrate. A divalent metal cation-binding residues include Asp251, Asp262, and His331. His339 is a substrate binding site. The a divalent metal cation site is built by Glu364 and Glu459.

The protein belongs to the peptidase M24A family. Methionine aminopeptidase eukaryotic type 2 subfamily. As to quaternary structure, binds EIF2S1 at low magnesium concentrations. Interacts strongly with the eIF-2 gamma-subunit EIF2S3. It depends on Co(2+) as a cofactor. The cofactor is Zn(2+). Mn(2+) is required as a cofactor. Requires Fe(2+) as cofactor. Contains approximately 12 O-linked N-acetylglucosamine (GlcNAc) residues. O-glycosylation is required for EIF2S1 binding.

The protein resides in the cytoplasm. The enzyme catalyses Release of N-terminal amino acids, preferentially methionine, from peptides and arylamides.. Its function is as follows. Cotranslationally removes the N-terminal methionine from nascent proteins. The N-terminal methionine is often cleaved when the second residue in the primary sequence is small and uncharged (Met-Ala-, Cys, Gly, Pro, Ser, Thr, or Val). In terms of biological role, protects eukaryotic initiation factor EIF2S1 from translation-inhibiting phosphorylation by inhibitory kinases such as EIF2AK2/PKR and EIF2AK1/HCR. Plays a critical role in the regulation of protein synthesis. The sequence is that of Methionine aminopeptidase 2 (Metap2) from Mus musculus (Mouse).